The primary structure comprises 279 residues: Pantothenate synthetase (279 aa).

Position 26–33 (26–33 (MGNLHDGH)) interacts with ATP. H33 functions as the Proton donor in the catalytic mechanism. Q57 serves as a coordination point for (R)-pantoate. Residue Q57 participates in beta-alanine binding. 144-147 (GKKD) is an ATP binding site. Q150 contributes to the (R)-pantoate binding site. ATP-binding positions include V173 and 181-184 (LSSR).

The protein belongs to the pantothenate synthetase family. In terms of assembly, homodimer.

The protein resides in the cytoplasm. It catalyses the reaction (R)-pantoate + beta-alanine + ATP = (R)-pantothenate + AMP + diphosphate + H(+). It participates in cofactor biosynthesis; (R)-pantothenate biosynthesis; (R)-pantothenate from (R)-pantoate and beta-alanine: step 1/1. Catalyzes the condensation of pantoate with beta-alanine in an ATP-dependent reaction via a pantoyl-adenylate intermediate. The sequence is that of Pantothenate synthetase from Burkholderia mallei (strain NCTC 10229).